A 477-amino-acid chain; its full sequence is Cytochrome P450 716A1 (477 aa).

Residues 2–22 (YMAIMIILFLSSILLSLLLLL) traverse the membrane as a helical segment. Heme is bound at residue cysteine 424.

Belongs to the cytochrome P450 family. Requires heme as cofactor.

It is found in the membrane. Functionally, possesses triterpene oxidizing activity. Catalyzes the C28 hydroxylation of alpha-amyrin, beta-amyrin, and lupeol, producing uvaol, erythrodiol, and betulin, respectively. Catalyzes the C28 carboxylation of alpha- and beta-amyrin. The sequence is that of Cytochrome P450 716A1 from Arabidopsis thaliana (Mouse-ear cress).